The sequence spans 303 residues: Archaeosortase A (303 aa).

7 consecutive transmembrane segments (helical) span residues 3–23, 36–56, 60–80, 93–113, 169–189, 200–220, and 259–279; these read GLLS…GAVA, TAAW…FTLV, YIEG…GWLL, AVAA…FTLL, VVLA…IAAV, LAIA…FIAI, and LAVV…PELL. Cysteine 173 functions as the Acyl-thioester intermediate in the catalytic mechanism. Catalysis depends on arginine 214, which acts as the Proton donor.

This sequence belongs to the exosortase/archaeosortase family. Archaeosortase A subfamily.

It is found in the cell membrane. Transpeptidase that recognizes and modifies its substrate by proteolytic cleavage of a sorting signal. Following cleavage, a covalent intermediate is formed via a thioester bond between the archaeosortase and its substrate, which is then transferred and covalently attached to the cell membrane. This sortase recognizes a tripartite structure consisting of a conserved Pro-Gly-Phe (PGF) motif, followed by a transmembrane alpha helix domain and a cluster of basic residues, usually at the C-terminus of target proteins. Confirmed substrates include the cell surface S-layer glycoprotein Csg and HVO_0405. ArtA is required for the C-terminal processing of Csg and for its lipidation and attachment to the archaeal plasma membrane. It is also required for the processing of HVO_0405, which contains an atypical central tripartite structure. This chain is Archaeosortase A, found in Haloferax volcanii (strain ATCC 29605 / DSM 3757 / JCM 8879 / NBRC 14742 / NCIMB 2012 / VKM B-1768 / DS2) (Halobacterium volcanii).